A 59-amino-acid chain; its full sequence is U-myrmeciitoxin(01)-Mg5a (59 aa).

A signal peptide spans 1–21 (MRLSYLSLALAIIFVLTIMHA). Positions 22-38 (SNVEAKASADPEPDAVG) are excised as a propeptide.

In terms of tissue distribution, expressed by the venom gland.

It is found in the secreted. Functionally, may have antimicrobial properties, like most ant linear peptides. The chain is U-myrmeciitoxin(01)-Mg5a from Myrmecia gulosa (Red bulldog ant).